Here is an 891-residue protein sequence, read N- to C-terminus: Alanine--tRNA ligase (891 aa).

4 residues coordinate Zn(2+): His564, His568, Cys678, and His682.

Belongs to the class-II aminoacyl-tRNA synthetase family. Zn(2+) serves as cofactor.

It localises to the cytoplasm. The catalysed reaction is tRNA(Ala) + L-alanine + ATP = L-alanyl-tRNA(Ala) + AMP + diphosphate. Catalyzes the attachment of alanine to tRNA(Ala) in a two-step reaction: alanine is first activated by ATP to form Ala-AMP and then transferred to the acceptor end of tRNA(Ala). Also edits incorrectly charged Ser-tRNA(Ala) and Gly-tRNA(Ala) via its editing domain. This Nitrobacter hamburgensis (strain DSM 10229 / NCIMB 13809 / X14) protein is Alanine--tRNA ligase.